Consider the following 443-residue polypeptide: uncharacterized protein (443 aa).

This is an uncharacterized protein from Mycoplasma genitalium (strain ATCC 33530 / DSM 19775 / NCTC 10195 / G37) (Mycoplasmoides genitalium).